Consider the following 141-residue polypeptide: Small ribosomal subunit protein uS11 (141 aa).

It belongs to the universal ribosomal protein uS11 family. In terms of assembly, part of the 30S ribosomal subunit.

Functionally, located on the platform of the 30S subunit. This is Small ribosomal subunit protein uS11 from Pyrobaculum calidifontis (strain DSM 21063 / JCM 11548 / VA1).